We begin with the raw amino-acid sequence, 124 residues long: Glutaredoxin-2 (124 aa).

Cysteine 13 and cysteine 16 are oxidised to a cystine.

Belongs to the glutaredoxin family. In terms of assembly, homodimer.

The protein resides in the host cytoplasm. Glutaredoxin necessary for virion morphogenesis and virus replication. Functions as a thiol-disulfide transfer protein between membrane-associated OPG128 and substrates OPG095 or OPG053. The complete pathway for formation of disulfide bonds in intracellular virion membrane proteins sequentially involves oxidation of OPG072, OPG128 and OPG088. Exhibit thioltransferase and dehydroascorbate reductase activities in vitro. The sequence is that of Glutaredoxin-2 (OPG088) from Mus musculus (Mouse).